The following is a 642-amino-acid chain: MADDTGTEEGLGCSGWFSVEAIVERTTENTISDDEDENVEDSGLDLVDFVDDSRIIPTNQLKAQALLNRQQAHADKEAVQALKRKLLGSPYESPASDLQESINKELSPRLGGLQLCRGSQGAKRRLFQSLENRDSGYGYSEVEIRQEQVENGHGAPDGSMGNGGGMGSVHGVQENQEIGTNTPTTRVVELLKCKNLQATLLGKFKELFGLSFGDLVRQFKSDKSSCTDWVVAAFGVHHSIAEGFNTLIKAEALYTHIQWLTCTWGMVLLMLIRFKCGKNRTTVSKGMCKLLNIPANQLLIEPPRLQSVAAAIYWFRAGISNASVVTGETPEWIQRQTIVEHCFADTQFNLTEMVQWAYDNDLTEDSDIAYEYAQRADTDSNAAAFLKSNCQAKYVKDCGIMCRHYKKAQMKRMSMPQWIKHRSERTGDNGDWRPIVKFIRYQGIDFLTFMSAFKKFLHNIPKKSCLVLIGPPNTGKSQFGMSLVKFLAGTVISFVNSHSHFWLQPLDSAKIAMLDDATPPCWTYLDTYLRNLLDGNPCSIDRKHKALTVVKCPPLIITSNTDIRTEDRWKYLYSRISLFEFPNPFPLDKNGNPVYVLNDENWKSFFQRLWSSLEFQESEDEEENGDTGQTFRCVPGTVVRTV.

Residues 83–85 carry the Nuclear localization signal motif; it reads KRK. Phosphoserine; by host occurs at positions 89, 93, and 107. The short motif at 106–115 is the Nuclear export signal element; the sequence is LSPRLGGLQL. A DNA-binding region region spans residues 179 to 345; the sequence is GTNTPTTRVV…QTIVEHCFAD (167 aa). The SF3 helicase domain maps to 444-594; it reads IDFLTFMSAF…FPLDKNGNPV (151 aa). 470-477 serves as a coordination point for ATP; it reads GPPNTGKS. Lys551 is covalently cross-linked (Glycyl lysine isopeptide (Lys-Gly) (interchain with G-Cter in SUMO)).

Belongs to the papillomaviridae E1 protein family. In terms of assembly, can form hexamers. Interacts with E2 protein; this interaction increases E1 DNA binding specificity. Interacts with host DNA polymerase subunit POLA2. Interacts with host single stranded DNA-binding protein RPA1. Interacts with host TOP1; this interaction stimulates the enzymatic activity of TOP1. Phosphorylated. In terms of processing, sumoylated.

The protein resides in the host nucleus. It catalyses the reaction Couples ATP hydrolysis with the unwinding of duplex DNA by translocating in the 3'-5' direction.. The enzyme catalyses ATP + H2O = ADP + phosphate + H(+). Functionally, ATP-dependent DNA 3'-5' helicase required for initiation of viral DNA replication. It forms a complex with the viral E2 protein. The E1-E2 complex binds to the replication origin which contains binding sites for both proteins. During the initial step, a dimer of E1 interacts with a dimer of protein E2 leading to a complex that binds the viral origin of replication with high specificity. Then, a second dimer of E1 displaces the E2 dimer in an ATP-dependent manner to form the E1 tetramer. Following this, two E1 monomers are added to each half of the site, which results in the formation of two E1 trimers on the viral ori. Subsequently, two hexamers will be created. The double hexamer acts as a bi-directional helicase machinery and unwinds the viral DNA and then recruits the host DNA polymerase to start replication. The protein is Replication protein E1 of Human papillomavirus type 32.